We begin with the raw amino-acid sequence, 315 residues long: Protoheme IX farnesyltransferase (315 aa).

A run of 9 helical transmembrane segments spans residues Val-32–Asn-52, Pro-53–Leu-73, Ile-93–Phe-113, Leu-120–Ile-140, Ile-153–Gly-173, Leu-180–Phe-200, Ala-226–Ala-246, Phe-249–Trp-269, and Ile-295–Phe-315.

It belongs to the UbiA prenyltransferase family. Protoheme IX farnesyltransferase subfamily.

It is found in the cell inner membrane. The enzyme catalyses heme b + (2E,6E)-farnesyl diphosphate + H2O = Fe(II)-heme o + diphosphate. The protein operates within porphyrin-containing compound metabolism; heme O biosynthesis; heme O from protoheme: step 1/1. In terms of biological role, converts heme B (protoheme IX) to heme O by substitution of the vinyl group on carbon 2 of heme B porphyrin ring with a hydroxyethyl farnesyl side group. This Brucella suis (strain ATCC 23445 / NCTC 10510) protein is Protoheme IX farnesyltransferase.